A 526-amino-acid polypeptide reads, in one-letter code: Sterol 14-alpha demethylase CYP51A (526 aa).

A helical transmembrane segment spans residues 27 to 47; that stretch reads IGFAVFLVLSVVLNVLNQLLF. Y123 serves as a coordination point for lanosterol. Residue C470 coordinates heme.

It belongs to the cytochrome P450 family. Heme is required as a cofactor.

It localises to the endoplasmic reticulum membrane. It catalyses the reaction a 14alpha-methyl steroid + 3 reduced [NADPH--hemoprotein reductase] + 3 O2 = a Delta(14) steroid + formate + 3 oxidized [NADPH--hemoprotein reductase] + 4 H2O + 4 H(+). The catalysed reaction is a 14alpha-methyl steroid + reduced [NADPH--hemoprotein reductase] + O2 = a 14alpha-hydroxymethyl steroid + oxidized [NADPH--hemoprotein reductase] + H2O + H(+). The enzyme catalyses a 14alpha-hydroxymethyl steroid + reduced [NADPH--hemoprotein reductase] + O2 = a 14alpha-formyl steroid + oxidized [NADPH--hemoprotein reductase] + 2 H2O + H(+). It carries out the reaction a 14alpha-formyl steroid + reduced [NADPH--hemoprotein reductase] + O2 = a Delta(14) steroid + formate + oxidized [NADPH--hemoprotein reductase] + H2O + 2 H(+). It catalyses the reaction lanosterol + 3 reduced [NADPH--hemoprotein reductase] + 3 O2 = 4,4-dimethyl-5alpha-cholesta-8,14,24-trien-3beta-ol + formate + 3 oxidized [NADPH--hemoprotein reductase] + 4 H2O + 4 H(+). The catalysed reaction is lanosterol + reduced [NADPH--hemoprotein reductase] + O2 = 32-hydroxylanosterol + oxidized [NADPH--hemoprotein reductase] + H2O + H(+). The enzyme catalyses 32-hydroxylanosterol + reduced [NADPH--hemoprotein reductase] + O2 = 32-oxolanosterol + oxidized [NADPH--hemoprotein reductase] + 2 H2O + H(+). It carries out the reaction 32-oxolanosterol + reduced [NADPH--hemoprotein reductase] + O2 = 4,4-dimethyl-5alpha-cholesta-8,14,24-trien-3beta-ol + formate + oxidized [NADPH--hemoprotein reductase] + H2O + 2 H(+). It catalyses the reaction eburicol + 3 reduced [NADPH--hemoprotein reductase] + 3 O2 = 14-demethyleburicol + formate + 3 oxidized [NADPH--hemoprotein reductase] + 4 H2O + 4 H(+). The catalysed reaction is eburicol + reduced [NADPH--hemoprotein reductase] + O2 = 32-hydroxyeburicol + oxidized [NADPH--hemoprotein reductase] + H2O + H(+). The enzyme catalyses 32-hydroxyeburicol + reduced [NADPH--hemoprotein reductase] + O2 = 32-oxoeburicol + oxidized [NADPH--hemoprotein reductase] + 2 H2O + H(+). It carries out the reaction 32-oxoeburicol + reduced [NADPH--hemoprotein reductase] + O2 = 14-demethyleburicol + formate + oxidized [NADPH--hemoprotein reductase] + H2O + 2 H(+). The protein operates within steroid metabolism; ergosterol biosynthesis. Functionally, together with cyp51A and cyp51C, encodes the sterol 14alpha-demethylase that plays a critical role in the third module of ergosterol biosynthesis pathway, being ergosterol the major sterol component in fungal membranes that participates in a variety of functions. Essential for ascospore production. The third module or late pathway involves the ergosterol synthesis itself through consecutive reactions that mainly occur in the endoplasmic reticulum (ER) membrane. In filamentous fungi, during the initial step of this module, lanosterol (lanosta-8,24-dien-3beta-ol) can be metabolized to eburicol. Sterol 14alpha-demethylase catalyzes the three-step oxidative removal of the 14alpha-methyl group (C-32) of both these sterols in the form of formate, and converts eburicol and lanosterol to 14-demethyleburicol (4,4,24-trimethylergosta-8,14,24(28)-trienol) and 4,4-dimethyl-5alpha-cholesta-8,14,24-trien-3beta-ol, respectively, which are further metabolized by other enzymes in the pathway to ergosterol. Can also use substrates not intrinsic to fungi, such as 24,25-dihydrolanosterol (DHL), producing 4,4'-dimethyl-8,14-cholestadien-3-beta-ol, but at lower rates than the endogenous substrates. In Gibberella zeae (strain ATCC MYA-4620 / CBS 123657 / FGSC 9075 / NRRL 31084 / PH-1) (Wheat head blight fungus), this protein is Sterol 14-alpha demethylase CYP51A.